Consider the following 198-residue polypeptide: (S)-2-hydroxypropylphosphonic acid epoxidase (198 aa).

In terms of domain architecture, HTH cro/C1-type spans 15 to 70 (LKDRREQVKMDHAALASLLGETPETVAAWENGEGGELTLTQLGRIAHVLGTSIGAL). Position 23 (lysine 23) interacts with substrate. Residues 26–45 (HAALASLLGETPETVAAWEN) constitute a DNA-binding region (H-T-H motif). Substrate-binding positions include arginine 97, tyrosine 105, 135–138 (NSGH), and glutamate 142. In terms of domain architecture, Cupin type-2 spans 136–196 (SGHAGNEFLF…GTGSAKLIAV (61 aa)). Histidine 138, glutamate 142, and histidine 180 together coordinate Fe cation.

It belongs to the non-heme iron-dependent dioxygenase family. As to quaternary structure, homotetramer. It depends on Fe(2+) as a cofactor.

The enzyme catalyses (S)-2-hydroxypropylphosphonate + H2O2 = (1R,2S)-epoxypropylphosphonate + 2 H2O. Its pathway is antibiotic biosynthesis; fosfomycin biosynthesis. Its function is as follows. Non-heme-dependent dioxygenase that catalyzes the oxidative epoxidation of (S)-2-hydroxypropylphosphonate into (1R,2S)-epoxypropylphosphonate, the final step in the biosynthesis of fosfomycin antibiotic. The sequence is that of (S)-2-hydroxypropylphosphonic acid epoxidase (hppE) from Streptomyces wedmorensis.